The primary structure comprises 252 residues: Body wall muscle protein HR-29 (252 aa).

Position 2 is an N-acetylserine (S2). A run of 3 repeats spans residues 37–55, 56–74, and 75–93. Residues 37–93 are 3 X 19 AA approximate tandem repeats; the sequence is RDWMTTPYSSTGIGRRDLSQDWMTTPYTPAGVGRRDLSQDWMTTPYTSKGIGSRNLS. In terms of domain architecture, sHSP spans 138–249; it reads ISVEHEGKTT…KKTAVPVTVE (112 aa).

The protein belongs to the small heat shock protein (HSP20) family. Exists as an oligomer.

It is found in the membrane. Functionally, may be a component of myofibrils where it acts as a stabilizer. In Halocynthia roretzi (Sea squirt), this protein is Body wall muscle protein HR-29.